The chain runs to 156 residues: Large ribosomal subunit protein uL22 (156 aa).

The protein belongs to the universal ribosomal protein uL22 family. As to quaternary structure, part of the 50S ribosomal subunit.

This protein binds specifically to 23S rRNA. It makes multiple contacts with different domains of the 23S rRNA in the assembled 50S subunit and ribosome. Its function is as follows. The globular domain of the protein is located near the polypeptide exit tunnel on the outside of the subunit, while an extended beta-hairpin is found that lines the wall of the exit tunnel in the center of the 70S ribosome. The polypeptide is Large ribosomal subunit protein uL22 (Hyperthermus butylicus (strain DSM 5456 / JCM 9403 / PLM1-5)).